The sequence spans 439 residues: 23S rRNA (uracil(1939)-C(5))-methyltransferase RlmD (439 aa).

One can recognise a TRAM domain in the interval 10-69 (KTQLNTRHQAVQVERLDHHGAGIAYLKKKPLFIDGALPGEEVVTQLVEEKSKFARGKLIK). Residues Cys-82, Cys-88, Cys-91, and Cys-169 each contribute to the [4Fe-4S] cluster site. S-adenosyl-L-methionine-binding residues include Gln-272, Phe-301, Asn-306, Glu-322, Asn-349, and Asp-370. The active-site Nucleophile is Cys-396.

This sequence belongs to the class I-like SAM-binding methyltransferase superfamily. RNA M5U methyltransferase family. RlmD subfamily.

The enzyme catalyses uridine(1939) in 23S rRNA + S-adenosyl-L-methionine = 5-methyluridine(1939) in 23S rRNA + S-adenosyl-L-homocysteine + H(+). In terms of biological role, catalyzes the formation of 5-methyl-uridine at position 1939 (m5U1939) in 23S rRNA. This is 23S rRNA (uracil(1939)-C(5))-methyltransferase RlmD from Vibrio campbellii (strain ATCC BAA-1116).